The chain runs to 322 residues: Probable uridine nucleosidase 2 (322 aa).

Residues Asp14 and His246 contribute to the active site.

This sequence belongs to the IUNH family. Component of the NSH heterocomplex made of URH1/NSH1 and URH2/NSH2 which exhibits strong xanthosine nucleosidase activity. Interacts with URH1. As to expression, expressed in roots, seedlings and flowers.

It is found in the cytoplasm. The protein resides in the cytosol. The catalysed reaction is uridine + H2O = D-ribose + uracil. The enzyme catalyses inosine + H2O = hypoxanthine + D-ribose. It carries out the reaction xanthosine + H2O = D-ribose + xanthine. Involved in pyrimidine breakdown, especially in response to dark stress. In the presence of URH1, exhibits efficient inosine and xanthosine hydrolytic activities. Support inosine breakdown especially during the late phase of senescence. The chain is Probable uridine nucleosidase 2 from Arabidopsis thaliana (Mouse-ear cress).